Consider the following 237-residue polypeptide: Zinc finger AN1 domain-containing stress-associated protein 14 (237 aa).

Positions 1-31 (MATKRKCPANGDDGGVADLEPVAGGSFASPP) are disordered. The AN1-type zinc-finger motif lies at 171-217 (QPEANRCATCRRKVGLTGFKCRCGGTFCGGHRYADEHGCGFDYKSSG). Zn(2+) contacts are provided by cysteine 177, cysteine 180, cysteine 191, cysteine 193, cysteine 198, histidine 201, histidine 207, and cysteine 209.

Functionally, may be involved in environmental stress response. The polypeptide is Zinc finger AN1 domain-containing stress-associated protein 14 (SAP14) (Oryza sativa subsp. japonica (Rice)).